A 20-amino-acid polypeptide reads, in one-letter code: ATSAAQGAALDESVRKVLKP.

The disordered stretch occupies residues 1–20 (ATSAAQGAALDESVRKVLKP).

The chain is Unknown protein NF009 from 2D-PAGE from Naegleria fowleri (Brain eating amoeba).